The primary structure comprises 467 residues: Mothers against decapentaplegic homolog 2 (467 aa).

N-acetylserine is present on Ser2. Residue Thr8 is modified to Phosphothreonine. One can recognise an MH1 domain in the interval 10-176; sequence PVVKRLLGWK…YQRVETPVLP (167 aa). An N6-acetyllysine modification is found at Lys19. Zn(2+) is bound by residues Cys74, Cys149, Cys161, and His166. Polar residues predominate over residues 207–217; it reads PAGIEPQSNYI. Residues 207–251 form a disordered region; the sequence is PAGIEPQSNYIPETPPPGYISEDGETSDQQLNQSMDTGSPAELSP. The residue at position 220 (Thr220) is a Phosphothreonine. Positions 221-225 match the PY-motif motif; sequence PPPGY. The span at 233 to 243 shows a compositional bias: polar residues; the sequence is SDQQLNQSMDT. Ser240 is subject to Phosphoserine; by CAMK2. Phosphoserine is present on residues Ser245, Ser250, Ser255, Ser458, Ser460, and Ser464. The MH2 domain maps to 274–467; it reads WCSIAYYELN…SPSVRCSSMS (194 aa). Residues Ser465 and Ser467 each carry the phosphoserine; by TGFBR1 modification.

Belongs to the dwarfin/SMAD family. Monomer; in the absence of TGF-beta. Heterodimer; in the presence of TGF-beta. Forms a heterodimer with co-SMAD, SMAD4, in the nucleus to form the transactivation complex SMAD2/SMAD4. Found in a complex with SMAD3 and TRIM33 upon addition of TGF-beta. Identified in a complex that contains at least ZNF451, SMAD2, SMAD3 and SMAD4. Interacts (via the MH2 domain) with ZFYVE9; may form trimers with the SMAD4 co-SMAD. Interacts with TAZ/WWRT1. Interacts with FOXH1. Interacts with SNW1. Interacts with CREB-binding protein (CBP) and EP300. Interacts with SNON. Interacts with ALK4/ACVR1B. Interacts with SKOR1. Interacts with SKOR2. Interacts with PRDM16. Interacts (via MH2 domain) with LEMD3. Interacts with RBPMS. Interacts with WWP1. Interacts (dephosphorylated form, via the MH1 and MH2 domains) with RANBP3 (via its C-terminal R domain); the interaction results in the export of dephosphorylated SMAD3 out of the nucleus and termination of the TGF-beta signaling. Interacts with PDPK1 (via PH domain). Interacts with DAB2; the interactions are enhanced upon TGF-beta stimulation. Interacts with USP15. Interacts with PPP5C. Interacts with LDLRAD4 (via the SMAD interaction motif). Interacts (via MH2 domain) with PMEPA1 (via the SMAD interaction motif). Interacts with ZFHX3. Interacts with ZNF451. Interacts with SMURF2 when phosphorylated on Ser-465/467. Interacts with PPM1A. Interacts with TGF-beta. Interacts with TGFBR1. Interacts with TGIF. Interacts with SMAD3 and TRIM33. Interacts with ZNF580. Interacts with NEDD4L in response to TGF-beta. Interacts with HGS. Interacts with AIP1. Interacts with WWP1. Interacts with PML. Interacts weakly with ZNF8. Interacts (when phosphorylated) with RNF111; RNF111 acts as an enhancer of the transcriptional responses by mediating ubiquitination and degradation of SMAD2 inhibitors. Interacts with YAP1 (when phosphorylated at 'Ser-55'). Interacts when phosphorylated with IPO7; the interaction facilitates translocation of SMAD2 to the nucleus. Interacts with MTMR4; negatively regulates TGF-beta signaling through SMAD2 dephosphorylation and retention in endosomes. In response to TGF-beta, phosphorylated on the C-terminal SXS motif by TGF-beta and activin type 1 receptor kinases, phosphorylation declines progressively in a KMT5A-dependent manner. Phosphorylation in this motif is required for interaction with a number of proteins including SMURF2, SNON and SMAD4 in response to TGF-beta. Dephosphorylated in this motif by PPM1A leading to disruption of the SMAD2/3-SMAD4 complex, nuclear export and termination of the TGF-beta signaling. In response to decorin, the naturally occurring inhibitor of TGF-beta signaling, phosphorylated on Ser-240 by CaMK2. Phosphorylated by MAPK3 upon EGF stimulation; which increases transcriptional activity and stability, and is blocked by calmodulin. Phosphorylated by PDPK1. Post-translationally, acetylated on Lys-19 by coactivators in response to TGF-beta signaling, which increases transcriptional activity. In terms of processing, in response to TGF-beta, ubiquitinated by NEDD4L; which promotes its degradation. Monoubiquitinated, leading to prevent DNA-binding. Deubiquitination by USP15 alleviates inhibition and promotes activation of TGF-beta target genes. Ubiquitinated by RNF111, leading to its degradation: only SMAD2 proteins that are 'in use' are targeted by RNF111, RNF111 playing a key role in activating SMAD2 and regulating its turnover.

The protein resides in the cytoplasm. The protein localises to the nucleus. Receptor-regulated SMAD (R-SMAD) that is an intracellular signal transducer and transcriptional modulator activated by TGF-beta (transforming growth factor) and activin type 1 receptor kinases. Binds the TRE element in the promoter region of many genes that are regulated by TGF-beta and, on formation of the SMAD2/SMAD4 complex, activates transcription. Promotes TGFB1-mediated transcription of odontoblastic differentiation genes in dental papilla cells. Positively regulates PDPK1 kinase activity by stimulating its dissociation from the 14-3-3 protein YWHAQ which acts as a negative regulator. The chain is Mothers against decapentaplegic homolog 2 (SMAD2) from Bos taurus (Bovine).